A 426-amino-acid polypeptide reads, in one-letter code: Histone-binding protein RBBP7 (426 aa).

7 WD repeats span residues 47-123, 129-174, 182-218, 229-270, 276-313, 319-370, and 377-404; these read QWLP…KINH, RARY…LRLR, GLSW…KIVD, VVED…HSVD, VNCL…LHSF, EIFQ…LFIH, and ISDF…VWQM.

The protein belongs to the WD repeat RBAP46/RBAP48/MSI1 family. In terms of assembly, binds directly to helix 1 of the histone fold of histone H4, a region that is not accessible when H4 is in chromatin.

The protein resides in the nucleus. Core histone-binding subunit that may target chromatin remodeling factors, histone acetyltransferases and histone deacetylases to their histone substrates in a manner that is regulated by nucleosomal DNA. Component of several complexes which regulate chromatin metabolism. This chain is Histone-binding protein RBBP7 (rbbp7), found in Danio rerio (Zebrafish).